Here is a 263-residue protein sequence, read N- to C-terminus: N-acyl homoserine lactonase AttM (263 aa).

7 residues coordinate Zn(2+): H103, H105, D107, H108, H180, D202, and H247.

Belongs to the metallo-beta-lactamase superfamily. Zn(2+) serves as cofactor.

It catalyses the reaction an N-acyl-L-homoserine lactone + H2O = an N-acyl-L-homoserine + H(+). This chain is N-acyl homoserine lactonase AttM, found in Agrobacterium fabrum (strain C58 / ATCC 33970) (Agrobacterium tumefaciens (strain C58)).